The chain runs to 424 residues: MYALYFILVVVLCCIMMSTTVAHKMKEHIPFFEDMCKGIKAGDTCEKLVGYSAVYRVCFGMACFFFIFCLLTLKINNSKSCRAHIHNGFWFFKLLLLGAMCSGAFFIPDQDTFLNAWRYVGAVGGFLFIGIQLLLLVEFAHKWNKNWTAGTASNKLWYASLALVTLIMYSIATGGLVLMAVFYTQKDGCMENKILLGVNGGLCVLISLVAISPCVQNRQPHSGLLQSGVISCYVTYLTFSALSSKPAEVVLDEHGKNVTICVPDFGQDLYRDENLVTILGTSLLIGCILYSCLTSTTRSSSDALQGRYAAPELEIARCCFCFSPGGEDTEEQQQGKEGPRVIYDEKKGTVYIYSYFHFVFFLASLYVMMTVTNWFNYESANIESFFSGSWSIFWVKMASCWICVLLYLCTLVAPLCCPTREFSV.

Topologically, residues 1–6 (MYALYF) are extracellular. A helical membrane pass occupies residues 7-23 (ILVVVLCCIMMSTTVAH). The Cytoplasmic segment spans residues 24 to 52 (KMKEHIPFFEDMCKGIKAGDTCEKLVGYS). A helical membrane pass occupies residues 53–73 (AVYRVCFGMACFFFIFCLLTL). Over 74 to 87 (KINNSKSCRAHIHN) the chain is Extracellular. An N-linked (GlcNAc...) asparagine glycan is attached at asparagine 76. Residues 88 to 108 (GFWFFKLLLLGAMCSGAFFIP) traverse the membrane as a helical segment. At 109-119 (DQDTFLNAWRY) the chain is on the cytoplasmic side. Residues 120–140 (VGAVGGFLFIGIQLLLLVEFA) form a helical membrane-spanning segment. Residues 141–161 (HKWNKNWTAGTASNKLWYASL) lie on the Extracellular side of the membrane. N-linked (GlcNAc...) asparagine glycosylation is present at asparagine 146. A helical membrane pass occupies residues 162-182 (ALVTLIMYSIATGGLVLMAVF). Over 183-193 (YTQKDGCMENK) the chain is Cytoplasmic. Residues 194-214 (ILLGVNGGLCVLISLVAISPC) traverse the membrane as a helical segment. Residues 215-221 (VQNRQPH) are Extracellular-facing. Residues 222–242 (SGLLQSGVISCYVTYLTFSAL) traverse the membrane as a helical segment. Residues 243–274 (SSKPAEVVLDEHGKNVTICVPDFGQDLYRDEN) lie on the Cytoplasmic side of the membrane. Residues 275–295 (LVTILGTSLLIGCILYSCLTS) traverse the membrane as a helical segment. Residues 296–348 (TTRSSSDALQGRYAAPELEIARCCFCFSPGGEDTEEQQQGKEGPRVIYDEKKG) are Extracellular-facing. Residues 349–369 (TVYIYSYFHFVFFLASLYVMM) form a helical membrane-spanning segment. Residues 370–391 (TVTNWFNYESANIESFFSGSWS) are Cytoplasmic-facing. The chain crosses the membrane as a helical span at residues 392–412 (IFWVKMASCWICVLLYLCTLV). Residues 413-424 (APLCCPTREFSV) lie on the Extracellular side of the membrane.

It belongs to the TDE1 family.

Its subcellular location is the cell membrane. It carries out the reaction a 1,2-diacyl-sn-glycero-3-phospho-L-serine(in) = a 1,2-diacyl-sn-glycero-3-phospho-L-serine(out). It catalyses the reaction a 1,2-diacyl-sn-glycero-3-phosphocholine(in) = a 1,2-diacyl-sn-glycero-3-phosphocholine(out). The enzyme catalyses a 1,2-diacyl-sn-glycero-3-phosphoethanolamine(in) = a 1,2-diacyl-sn-glycero-3-phosphoethanolamine(out). Functionally, restriction factor required to restrict infectivity of gammaretroviruses: acts by inhibiting an early step of viral infection. Impairs the penetration of the viral particle into the cytoplasm. Non-ATP-dependent, non-specific lipid transporter for phosphatidylserine, phosphatidylcholine, and phosphatidylethanolamine. Functions as a scramblase that flips lipids in both directions across the membrane. Phospholipid scrambling results in gammaretroviral surface exposure of phosphatidylserine and loss of membrane asymmetry, which leads to loss of infectivity. Enhances the incorporation of serine into phosphatidylserine and sphingolipids. May play a role in providing serine molecules for the formation of myelin glycosphingolipids in oligodendrocytes. The polypeptide is Serine incorporator 5 (SERINC5) (Macaca fascicularis (Crab-eating macaque)).